The sequence spans 318 residues: HPr kinase/phosphorylase (318 aa).

Residues His146 and Lys167 contribute to the active site. 161 to 168 contacts ATP; the sequence is GESGLGKS. Residue Ser168 coordinates Mg(2+). Catalysis depends on Asp185, which acts as the Proton acceptor; for phosphorylation activity. Proton donor; for dephosphorylation activity. The important for the catalytic mechanism of both phosphorylation and dephosphorylation stretch occupies residues 209 to 218; sequence LEVRGIGLLD. Mg(2+) is bound at residue Glu210. Arg252 is an active-site residue. Positions 273–278 are important for the catalytic mechanism of dephosphorylation; it reads QVVAGR.

It belongs to the HPrK/P family. Homohexamer. It depends on Mg(2+) as a cofactor.

It catalyses the reaction [HPr protein]-L-serine + ATP = [HPr protein]-O-phospho-L-serine + ADP + H(+). It carries out the reaction [HPr protein]-O-phospho-L-serine + phosphate + H(+) = [HPr protein]-L-serine + diphosphate. Its function is as follows. Catalyzes the ATP- as well as the pyrophosphate-dependent phosphorylation of a specific serine residue in HPr, a phosphocarrier protein of the phosphoenolpyruvate-dependent sugar phosphotransferase system (PTS). HprK/P also catalyzes the pyrophosphate-producing, inorganic phosphate-dependent dephosphorylation (phosphorolysis) of seryl-phosphorylated HPr (P-Ser-HPr). This Verminephrobacter eiseniae (strain EF01-2) protein is HPr kinase/phosphorylase.